A 319-amino-acid chain; its full sequence is Putrescine hydroxycinnamoyltransferase 2 (319 aa).

Active-site proton acceptor residues include His-160 and Asp-301.

This sequence belongs to the plant acyltransferase family.

Its function is as follows. Hydroxycinnamoyl transferase that catalyzes the transfer of an acyl from p-coumaryol-CoA to putrescine, to produce coumaroyl putrescine. The polypeptide is Putrescine hydroxycinnamoyltransferase 2 (Oryza sativa subsp. japonica (Rice)).